The sequence spans 247 residues: Uracil-DNA glycosylase (247 aa).

Catalysis depends on D83, which acts as the Proton acceptor.

It belongs to the uracil-DNA glycosylase (UDG) superfamily. UNG family.

Its subcellular location is the cytoplasm. It catalyses the reaction Hydrolyzes single-stranded DNA or mismatched double-stranded DNA and polynucleotides, releasing free uracil.. In terms of biological role, excises uracil residues from the DNA which can arise as a result of misincorporation of dUMP residues by DNA polymerase or due to deamination of cytosine. The chain is Uracil-DNA glycosylase from Deinococcus radiodurans (strain ATCC 13939 / DSM 20539 / JCM 16871 / CCUG 27074 / LMG 4051 / NBRC 15346 / NCIMB 9279 / VKM B-1422 / R1).